Consider the following 100-residue polypeptide: Urease subunit gamma (100 aa).

This sequence belongs to the urease gamma subunit family. In terms of assembly, heterotrimer of UreA (gamma), UreB (beta) and UreC (alpha) subunits. Three heterotrimers associate to form the active enzyme.

The protein localises to the cytoplasm. The catalysed reaction is urea + 2 H2O + H(+) = hydrogencarbonate + 2 NH4(+). It functions in the pathway nitrogen metabolism; urea degradation; CO(2) and NH(3) from urea (urease route): step 1/1. The polypeptide is Urease subunit gamma (Methylobacillus flagellatus (strain ATCC 51484 / DSM 6875 / VKM B-1610 / KT)).